Reading from the N-terminus, the 454-residue chain is tRNA(Ile)-lysidine synthase (454 aa).

27–32 (SGGSDS) contributes to the ATP binding site.

It belongs to the tRNA(Ile)-lysidine synthase family.

It is found in the cytoplasm. It carries out the reaction cytidine(34) in tRNA(Ile2) + L-lysine + ATP = lysidine(34) in tRNA(Ile2) + AMP + diphosphate + H(+). Ligates lysine onto the cytidine present at position 34 of the AUA codon-specific tRNA(Ile) that contains the anticodon CAU, in an ATP-dependent manner. Cytidine is converted to lysidine, thus changing the amino acid specificity of the tRNA from methionine to isoleucine. The polypeptide is tRNA(Ile)-lysidine synthase (Mesorhizobium japonicum (strain LMG 29417 / CECT 9101 / MAFF 303099) (Mesorhizobium loti (strain MAFF 303099))).